Consider the following 159-residue polypeptide: SsrA-binding protein (159 aa).

It belongs to the SmpB family.

It localises to the cytoplasm. Its function is as follows. Required for rescue of stalled ribosomes mediated by trans-translation. Binds to transfer-messenger RNA (tmRNA), required for stable association of tmRNA with ribosomes. tmRNA and SmpB together mimic tRNA shape, replacing the anticodon stem-loop with SmpB. tmRNA is encoded by the ssrA gene; the 2 termini fold to resemble tRNA(Ala) and it encodes a 'tag peptide', a short internal open reading frame. During trans-translation Ala-aminoacylated tmRNA acts like a tRNA, entering the A-site of stalled ribosomes, displacing the stalled mRNA. The ribosome then switches to translate the ORF on the tmRNA; the nascent peptide is terminated with the 'tag peptide' encoded by the tmRNA and targeted for degradation. The ribosome is freed to recommence translation, which seems to be the essential function of trans-translation. The sequence is that of SsrA-binding protein from Mycobacteroides abscessus (strain ATCC 19977 / DSM 44196 / CCUG 20993 / CIP 104536 / JCM 13569 / NCTC 13031 / TMC 1543 / L948) (Mycobacterium abscessus).